We begin with the raw amino-acid sequence, 122 residues long: Large ribosomal subunit protein uL14 (122 aa).

The protein belongs to the universal ribosomal protein uL14 family. In terms of assembly, part of the 50S ribosomal subunit. Forms a cluster with proteins L3 and L19. In the 70S ribosome, L14 and L19 interact and together make contacts with the 16S rRNA in bridges B5 and B8.

In terms of biological role, binds to 23S rRNA. Forms part of two intersubunit bridges in the 70S ribosome. This chain is Large ribosomal subunit protein uL14, found in Mesomycoplasma hyopneumoniae (strain 232) (Mycoplasma hyopneumoniae).